Consider the following 655-residue polypeptide: Sphingomyelin phosphodiesterase 3 (655 aa).

Topologically, residues 1 to 10 (MVLYTTPFPN) are cytoplasmic. The segment at residues 11–31 (SCLSALHAVSWALIFPCYWLV) is an intramembrane region (helical). Over 32-64 (DRLVASFIPTTYEKRQRADDPCYLQLFCTVLFT) the chain is Cytoplasmic. Residues Cys-53 and Cys-59 are each lipidated (S-palmitoyl cysteine). An intramembrane region (helical) is located at residues 65-85 (PVYLALLVAALPFAFLGFIFW). The Cytoplasmic segment spans residues 86 to 655 (SPLQSARRPY…LMVSAGEEEA (570 aa)). Phosphoserine is present on Ser-178. Disordered regions lie at residues 209-237 (VEYK…DGSL) and 250-320 (GGRA…SNSK). The span at 211–221 (YKGDGGRHPSD) shows a compositional bias: basic and acidic residues. Position 289 is a phosphoserine (Ser-289). Glu-362 provides a ligand contact to Mg(2+). Residues Cys-395 and Cys-396 are each lipidated (S-palmitoyl cysteine). The active-site Proton acceptor is the His-639.

It belongs to the neutral sphingomyelinase family. It depends on Mg(2+) as a cofactor. Post-translationally, palmitoylated, palmitoylation-deficient proteins are targeted for lysosomal degradation. In brain sections, it is restricted to neurons and especially prominent in large cells, including Purkinje cells, pyramidal cells, neurons of the dentate gyrus granular layer, and neurons in the pontine nuclei. Also present in the hypothalamic nuclei, neurons in the piriform cortex, and nuclei of the brainstem (at protein level). Mainly expressed in brain and jejunum. Weakly or not expressed in heart, spleen, lung, liver, kidney and testis.

The protein localises to the golgi apparatus membrane. It localises to the cell membrane. The catalysed reaction is a sphingomyelin + H2O = phosphocholine + an N-acylsphing-4-enine + H(+). It carries out the reaction N-(15Z-tetracosenoyl)sphing-4-enine-1-phosphocholine + H2O = N-(15Z-tetracosenoyl)-sphing-4-enine + phosphocholine + H(+). The enzyme catalyses N-(tetracosanoyl)-sphing-4-enine-1-phosphocholine + H2O = N-tetracosanoyl-sphing-4-enine + phosphocholine + H(+). It catalyses the reaction an N-(acyl)-sphingosylphosphocholine + H2O = an N-acyl-sphingoid base + phosphocholine + H(+). The catalysed reaction is 1-hexadecanoyl-sn-glycero-3-phosphocholine + H2O = 1-hexadecanoyl-sn-glycerol + phosphocholine + H(+). It carries out the reaction 1-O-octadecyl-sn-glycero-3-phosphocholine + H2O = 1-O-octadecyl-sn-glycerol + phosphocholine + H(+). The enzyme catalyses a sphingosylphosphocholine + H2O = a sphingoid base + phosphocholine + H(+). It catalyses the reaction N-(hexadecanoyl)-sphing-4-enine-1-phosphocholine + H2O = N-hexadecanoylsphing-4-enine + phosphocholine + H(+). Its pathway is lipid metabolism; sphingolipid metabolism. Its activity is regulated as follows. Inhibited by nSMase inhibitor GW4869. Binding of anionic phospholipids (APLs) such as phosphatidylserine (PS) and phosphatidic acid (PA) increases enzymatic activity. In terms of biological role, catalyzes the hydrolysis of sphingomyelin to form ceramide and phosphocholine. Ceramide mediates numerous cellular functions, such as apoptosis and growth arrest, and is capable of regulating these 2 cellular events independently. Also hydrolyzes sphingosylphosphocholine. Binds to anionic phospholipids (APLs) such as phosphatidylserine (PS) and phosphatidic acid (PA) that modulate enzymatic activity and subcellular location. Regulates the cell cycle by acting as a growth suppressor in confluent cells. Acts as a regulator of postnatal development and participates in bone and dentin mineralization. May be involved in IL-1-beta-induced JNK activation in hepatocytes. May act as a mediator in transcriptional regulation of NOS2/iNOS via the NF-kappa-B activation under inflammatory conditions. The polypeptide is Sphingomyelin phosphodiesterase 3 (Rattus norvegicus (Rat)).